A 1020-amino-acid chain; its full sequence is MQSCARAWGLRLGRGVGGGRRLAGGSGPCWAPRSRDSSSGGGDSAAAGASRLLERLLPRHDDFARRHIGPGDKDQREMLQTLGLASIDELIEKTVPANIRLKRPLKMEDPVCENEILATLHAISSKNQIWRSYIGMGYYNCSVPQTILRNLLENSGWITQYTPYQPEVSQGRLESLLNYQTMVCDITGLDMANASLLDEGTAAAEALQLCYRHNKRRKFLVDPRCHPQTIAVVQTRAKYTGVLTELKLPCEMDFSGKDVSGVLFQYPDTEGKVEDFTELVERAHQSGSLACCATDLLALCILRPPGEFGVDIALGSSQRFGVPLGYGGPHAAFFAVRESLVRMMPGRMVGVTRDATGKEVYRLALQTREQHIRRDKATSNICTAQALLANMAAMFAIYHGSHGLEHIARRVHNATLILSEGLKRAGHQLQHDLFFDTLKIQCGCSVKEVLGRAAQRQINFRLFEDGTLGISLDETVNEKDLDDLLWIFGCESSAELVAESMGEECRGIPGSVFKRTSPFLTHQVFNSYHSETNIVRYMKKLENKDISLVHSMIPLGSCTMKLNSSSELAPITWKEFANIHPFVPLDQAQGYQQLFRELEKDLCELTGYDQVCFQPNSGAQGEYAGLATIRAYLNQKGEGHRTVCLIPKSAHGTNPASAHMAGMKIQPVEVDKYGNIDAVHLKAMVDKHKENLAAIMITYPSTNGVFEENISDVCDLIHQHGGQVYLDGANMNAQVGICRPGDFGSDVSHLNLHKTFCIPHGGGGPGMGPIGVKKHLAPFLPNHPVISLKRNEDACPVGTVSAAPWGSSSILPISWAYIKMMGGKGLKQATETAILNANYMAKRLETHYRILFRGARGYVGHEFILDTRPFKKSANIEAVDVAKRLQDYGFHAPTMSWPVAGTLMVEPTESEDKAELDRFCDAMISIRQEIADIEEGRIDPRVNPLKMSPHSLTCVTSSHWDRPYSREVAAFPLPFVKPENKFWPTIARIDDIYGDQHLVCTCPPMEVYESPFSEQKRASS.

The transit peptide at Met1–Arg35 directs the protein to the mitochondrion. The tract at residues Arg21–Ala46 is disordered. An N6-acetyllysine mark is found at Lys447, Lys514, Lys648, and Lys664. Lys754 carries the post-translational modification N6-(pyridoxal phosphate)lysine.

Belongs to the GcvP family. Homodimer. Interacts with GCSH. The glycine cleavage system is composed of four proteins: P (GLDC), T (GCST), L (DLD) and H (GCSH). Pyridoxal 5'-phosphate is required as a cofactor.

The protein localises to the mitochondrion. The enzyme catalyses N(6)-[(R)-lipoyl]-L-lysyl-[glycine-cleavage complex H protein] + glycine + H(+) = N(6)-[(R)-S(8)-aminomethyldihydrolipoyl]-L-lysyl-[glycine-cleavage complex H protein] + CO2. Stimulated by lipoic acid. Inhibited in presence of methylamine. In terms of biological role, the glycine cleavage system catalyzes the degradation of glycine. The P protein (GLDC) binds the alpha-amino group of glycine through its pyridoxal phosphate cofactor; CO(2) is released and the remaining methylamine moiety is then transferred to the lipoamide cofactor of the H protein (GCSH). This is Glycine dehydrogenase (decarboxylating), mitochondrial from Homo sapiens (Human).